A 181-amino-acid chain; its full sequence is Bifunctional protein PyrR (181 aa).

Residues 39 to 40 (RR), 104 to 112 (DDVLYTGRT), arginine 137, and valine 161 contribute to the substrate site. The PRPP-binding motif lies at 100–112 (VILVDDVLYTGRT).

Belongs to the purine/pyrimidine phosphoribosyltransferase family. PyrR subfamily.

It catalyses the reaction UMP + diphosphate = 5-phospho-alpha-D-ribose 1-diphosphate + uracil. Functionally, regulates the transcription of the pyrimidine nucleotide (pyr) operon in response to exogenous pyrimidines. Also displays a weak uracil phosphoribosyltransferase activity which is not physiologically significant. This chain is Bifunctional protein PyrR, found in Pasteurella multocida (strain Pm70).